Reading from the N-terminus, the 319-residue chain is MVPGDASSVVSVNPAKPLISVCIPMYNNGATIERCLRSILEQEGVEFEIVVVDDDSSDDCAAIAATMLRPGDRLLRNEPRLGLNRNHNKCLEVARGGLIQFVHGDDRLLPGALQTLSRRFEDPSVGMAFAPRRVESDDIKWQQRYGRVHTRFRKLRDRNHGPSLVLQMVLHGAKENWIGEPTAVMFRRQLALDAGGFRTDIYQLVDVDFWLRLMLRSAVCFVPHELSVRRHTAATETTRVMATRRNVLDRQRILTWLIVDPLSPNSVRSAAALWWIPAWLAMIVEVAVLGPQRRTHLKALAPAPFREFAHARRQLPMAD.

A helical transmembrane segment spans residues 270-290 (AAALWWIPAWLAMIVEVAVLG).

It localises to the membrane. This is an uncharacterized protein from Mycobacterium tuberculosis (strain CDC 1551 / Oshkosh).